The following is a 466-amino-acid chain: Pentatricopeptide repeat-containing protein At4g01400, mitochondrial (466 aa).

The transit peptide at 1–34 directs the protein to the mitochondrion; the sequence is MIRRPIYDFAAVFRHLTSPLSTSSRFLFYSSSEH. 8 PPR repeats span residues 118-152, 153-188, 189-223, 224-258, 259-293, 294-328, 329-363, and 364-398; these read TGEI…NFTP, QPKH…GVMP, NTRS…DVVP, DVDS…GFVP, DRLS…GCNP, DLVH…GCSP, NSVS…GFSP, and HFSV…GETL.

This sequence belongs to the PPR family. P subfamily.

It is found in the mitochondrion. This chain is Pentatricopeptide repeat-containing protein At4g01400, mitochondrial, found in Arabidopsis thaliana (Mouse-ear cress).